We begin with the raw amino-acid sequence, 155 residues long: Protein-export protein SecB (155 aa).

It belongs to the SecB family. Homotetramer, a dimer of dimers. One homotetramer interacts with 1 SecA dimer.

It is found in the cytoplasm. One of the proteins required for the normal export of preproteins out of the cell cytoplasm. It is a molecular chaperone that binds to a subset of precursor proteins, maintaining them in a translocation-competent state. It also specifically binds to its receptor SecA. The protein is Protein-export protein SecB of Psychromonas ingrahamii (strain DSM 17664 / CCUG 51855 / 37).